A 96-amino-acid chain; its full sequence is Co-chaperonin GroES (96 aa).

The protein belongs to the GroES chaperonin family. As to quaternary structure, heptamer of 7 subunits arranged in a ring. Interacts with the chaperonin GroEL.

Its subcellular location is the cytoplasm. In terms of biological role, together with the chaperonin GroEL, plays an essential role in assisting protein folding. The GroEL-GroES system forms a nano-cage that allows encapsulation of the non-native substrate proteins and provides a physical environment optimized to promote and accelerate protein folding. GroES binds to the apical surface of the GroEL ring, thereby capping the opening of the GroEL channel. The sequence is that of Co-chaperonin GroES from Neisseria meningitidis serogroup B (strain ATCC BAA-335 / MC58).